A 96-amino-acid polypeptide reads, in one-letter code: Antitoxin ParD4 (96 aa).

The protein belongs to the ParD antitoxin family.

Functionally, antitoxin component of a type II toxin-antitoxin (TA) system. Neutralizes the effect of cognate toxin ParE4, but no other RelE or ParE toxin. The chain is Antitoxin ParD4 (parD4) from Caulobacter vibrioides (strain ATCC 19089 / CIP 103742 / CB 15) (Caulobacter crescentus).